We begin with the raw amino-acid sequence, 707 residues long: Solute carrier family 15 member 1 (707 aa).

The chain crosses the membrane as a helical span at residues 1–21 (MGMSKSLSCFGYPLSIFFIVV). The Extracellular portion of the chain corresponds to 22-53 (NEFCERFSYYGMRALLILYFRNFIGWDDNLST). N-linked (GlcNAc...) asparagine glycosylation occurs at asparagine 50. Residues 54-74 (VIYHTFVALCYLTPILGALIA) form a helical membrane-spanning segment. Residues 75–82 (DAWLGKFK) are Cytoplasmic-facing. The chain crosses the membrane as a helical span at residues 83 to 103 (TIVWLSIVYTIGQAVTSLSSV). Topologically, residues 104–118 (NELTDNNHDGTPDSL) are extracellular. Residues 119 to 139 (PVHVAVCMIGLLLIALGTGGI) traverse the membrane as a helical segment. The Cytoplasmic portion of the chain corresponds to 140–161 (KPCVSAFGGDQFEEGQEKQRNR). The chain crosses the membrane as a helical span at residues 162–182 (FFSIFYLAINAGSLLSTIITP). Residues 183 to 198 (MVRVQQCGIHVKQACY) are Extracellular-facing. Residues 199–219 (PLAFGIPAILMAVSLIVFIIG) traverse the membrane as a helical segment. Residues 220 to 276 (SGMYKKFKPQGNILSKVVKCICFAIKNRFRHRSKQFPKRAHWLDWAKEKYDERLIAQ) lie on the Cytoplasmic side of the membrane. Residues 277-297 (IKMVTRVLFLYIPLPMFWALF) form a helical membrane-spanning segment. At 298–327 (DQQGSRWTLQATTMSGRIGILEIQPDQMQT) the chain is on the extracellular side. The helical transmembrane segment at 328-348 (VNTILIIILVPIMDAVVYPLI) threads the bilayer. Topologically, residues 349 to 361 (AKCGLNFTSLKKM) are cytoplasmic. A helical transmembrane segment spans residues 362-382 (TIGMFLASMAFVAAAILQVEI). The Extracellular portion of the chain corresponds to 383-583 (DKTLPVFPKA…PPNTMNMAWQ (201 aa)). Residues 383 to 583 (DKTLPVFPKA…PPNTMNMAWQ (201 aa)) form an extracellular domain (ECD) region. Asparagine 439, asparagine 498, and asparagine 513 each carry an N-linked (GlcNAc...) asparagine glycan. A helical membrane pass occupies residues 584–604 (IPQYFLITSGEVVFSITGLEF). Over 605–618 (SYSQAPSNMKSVLQ) the chain is Cytoplasmic. A helical membrane pass occupies residues 619–639 (AGWLLTVAVGNIIVLIVAGAG). Residues 640–644 (QINKQ) lie on the Extracellular side of the membrane. Residues 645 to 665 (WAEYILFAALLLVVCVIFAIM) form a helical membrane-spanning segment. Residues 666-707 (ARFYTYVNPAEIEAQFEEDEKKKNPEKNDLYPSLAPVSQTQM) lie on the Cytoplasmic side of the membrane. The segment at 682–707 (EEDEKKKNPEKNDLYPSLAPVSQTQM) is disordered. Residues 684–694 (DEKKKNPEKND) show a composition bias toward basic and acidic residues.

The protein belongs to the major facilitator superfamily. Proton-dependent oligopeptide transporter (POT/PTR) (TC 2.A.17) family. As to quaternary structure, interacts (via extracellular domain region) with trypsin. Intestine, kidney, liver and low in brain.

It localises to the apical cell membrane. It catalyses the reaction a dipeptide(out) + H(+)(out) = a dipeptide(in) + H(+)(in). The enzyme catalyses an L-amino acid tripeptide(out) + H(+)(out) = an L-amino acid tripeptide(in) + H(+)(in). The catalysed reaction is L-alanyl-L-lysine(out) + H(+)(out) = L-alanyl-L-lysine(in) + H(+)(in). It carries out the reaction L-alanyl-L-proline(out) + H(+)(out) = L-alanyl-L-proline(in) + H(+)(in). It catalyses the reaction L-alanyl-L-valine(out) + H(+)(out) = L-alanyl-L-valine(in) + H(+)(in). The enzyme catalyses carnosine(out) + H(+)(out) = carnosine(in) + H(+)(in). The catalysed reaction is glycyl-L-glutamine(out) + H(+)(out) = glycyl-L-glutamine(in) + H(+)(in). It carries out the reaction glycyl-L-leucine(out) + H(+)(out) = glycyl-L-leucine(in) + H(+)(in). It catalyses the reaction glycyl-L-proline(out) + H(+)(out) = glycyl-L-proline(in) + H(+)(in). The enzyme catalyses glycyl-sarcosine(out) + H(+)(out) = glycyl-sarcosine(in) + H(+)(in). The catalysed reaction is L-leucyl-L-leucine(out) + H(+)(out) = L-leucyl-L-leucine(in) + H(+)(in). It carries out the reaction L-leucyl-L-proline(out) + H(+)(out) = L-leucyl-L-proline(in) + H(+)(in). It catalyses the reaction L-phenylalanyl-L-leucine(out) + H(+)(out) = L-phenylalanyl-L-leucine(in) + H(+)(in). The enzyme catalyses L-phenylalanyl-L-phenylalanine(out) + H(+)(out) = L-phenylalanyl-L-phenylalanine(in) + H(+)(in). The catalysed reaction is L-lysyl-glycine(out) + H(+)(out) = L-lysyl-glycine(in) + H(+)(in). It carries out the reaction L-tyrosylglycine(out) + H(+)(out) = L-tyrosylglycine(in) + H(+)(in). It catalyses the reaction L-alanyl-L-aspartate(out) + 2 H(+)(out) = L-alanyl-L-aspartate(in) + 2 H(+)(in). The enzyme catalyses L-aspartyl-glycine(out) + 2 H(+)(out) = L-aspartyl-glycine(in) + 2 H(+)(in). The catalysed reaction is glycyl-L-aspartate(out) + 2 H(+)(out) = glycyl-L-aspartate(in) + 2 H(+)(in). It carries out the reaction glycyl-L-glutamate(out) + 2 H(+)(out) = glycyl-L-glutamate(in) + 2 H(+)(in). It catalyses the reaction L-alanyl-L-leucyl-L-alanine(out) + H(+)(out) = L-alanyl-L-leucyl-L-alanine(in) + H(+)(in). The enzyme catalyses L-alanyl-L-prolylglycine(out) + H(+)(out) = L-alanyl-L-prolylglycine(in) + H(+)(in). The catalysed reaction is glycylglycyl-L-isoleucine(out) + H(+)(out) = glycylglycyl-L-isoleucine(in) + H(+)(in). It carries out the reaction glycylglycyl-L-proline(out) + H(+)(out) = glycylglycyl-L-proline(in) + H(+)(in). It catalyses the reaction L-methionyl-L-phenylalanyl-L-methionine(out) + H(+)(out) = L-methionyl-L-phenylalanyl-L-methionine(in) + H(+)(in). The enzyme catalyses N-acetyl-D-muramoyl-L-alanyl-D-isoglutamine(out) + 2 H(+)(out) = N-acetyl-D-muramoyl-L-alanyl-D-isoglutamine(in) + 2 H(+)(in). The catalysed reaction is N(alpha)-formyl-L-methionyl-L-leucyl-L-phenylalanine(out) + 2 H(+)(out) = N(alpha)-formyl-L-methionyl-L-leucyl-L-phenylalanine(in) + 2 H(+)(in). Electrogenic proton-coupled amino-acid transporter that transports oligopeptides of 2 to 4 amino acids with a preference for dipeptides. Transports neutral and monovalently charged peptides with a proton to peptide stoichiometry of 1:1 or 2:1. Primarily responsible for the absorption of dietary di- and tripeptides from the small intestinal lumen. Mediates transepithelial transport of muramyl and N-formylated bacterial dipeptides contributing to recognition of pathogenic bacteria by the mucosal immune system. The protein is Solute carrier family 15 member 1 (SLC15A1) of Oryctolagus cuniculus (Rabbit).